The following is a 450-amino-acid chain: uncharacterized protein (450 aa).

An N6-(pyridoxal phosphate)lysine modification is found at Lys-283.

Belongs to the class-III pyridoxal-phosphate-dependent aminotransferase family. Pyridoxal 5'-phosphate is required as a cofactor.

In terms of biological role, essential for glycerol catabolism. This is an uncharacterized protein from Bacillus subtilis (strain 168).